A 219-amino-acid polypeptide reads, in one-letter code: Orotate phosphoribosyltransferase (219 aa).

A 5-phospho-alpha-D-ribose 1-diphosphate-binding site is contributed by Lys-26. 34–35 (FF) provides a ligand contact to orotate. 5-phospho-alpha-D-ribose 1-diphosphate-binding positions include 72 to 73 (YK), Arg-98, Lys-99, Lys-102, His-104, and 124 to 132 (DDVITAGTA). 2 residues coordinate orotate: Thr-128 and Arg-156.

This sequence belongs to the purine/pyrimidine phosphoribosyltransferase family. PyrE subfamily. As to quaternary structure, homodimer. Requires Mg(2+) as cofactor.

It catalyses the reaction orotidine 5'-phosphate + diphosphate = orotate + 5-phospho-alpha-D-ribose 1-diphosphate. It participates in pyrimidine metabolism; UMP biosynthesis via de novo pathway; UMP from orotate: step 1/2. Catalyzes the transfer of a ribosyl phosphate group from 5-phosphoribose 1-diphosphate to orotate, leading to the formation of orotidine monophosphate (OMP). The sequence is that of Orotate phosphoribosyltransferase from Xylella fastidiosa (strain M23).